We begin with the raw amino-acid sequence, 184 residues long: ATP-dependent protease subunit HslV (184 aa).

Thr-2 is an active-site residue. Na(+) contacts are provided by Gly-157, Cys-160, and Thr-163.

This sequence belongs to the peptidase T1B family. HslV subfamily. As to quaternary structure, a double ring-shaped homohexamer of HslV is capped on each side by a ring-shaped HslU homohexamer. The assembly of the HslU/HslV complex is dependent on binding of ATP.

Its subcellular location is the cytoplasm. The enzyme catalyses ATP-dependent cleavage of peptide bonds with broad specificity.. Its activity is regulated as follows. Allosterically activated by HslU binding. Its function is as follows. Protease subunit of a proteasome-like degradation complex believed to be a general protein degrading machinery. This Vibrio vulnificus (strain CMCP6) protein is ATP-dependent protease subunit HslV.